The primary structure comprises 349 residues: UDP-N-acetylenolpyruvoylglucosamine reductase (349 aa).

One can recognise an FAD-binding PCMH-type domain in the interval 26–197 (FDARARVAAR…VAVTFRLPKA (172 aa)). The active site involves Arg173. Ser249 serves as the catalytic Proton donor. Glu345 is a catalytic residue.

The protein belongs to the MurB family. Requires FAD as cofactor.

It is found in the cytoplasm. It carries out the reaction UDP-N-acetyl-alpha-D-muramate + NADP(+) = UDP-N-acetyl-3-O-(1-carboxyvinyl)-alpha-D-glucosamine + NADPH + H(+). The protein operates within cell wall biogenesis; peptidoglycan biosynthesis. In terms of biological role, cell wall formation. In Burkholderia pseudomallei (strain 1710b), this protein is UDP-N-acetylenolpyruvoylglucosamine reductase.